A 92-amino-acid chain; its full sequence is Small ribosomal subunit protein uS19 (92 aa).

The protein belongs to the universal ribosomal protein uS19 family.

Functionally, protein S19 forms a complex with S13 that binds strongly to the 16S ribosomal RNA. The polypeptide is Small ribosomal subunit protein uS19 (Bacillus pumilus (strain SAFR-032)).